The chain runs to 348 residues: Putative S-adenosyl-L-methionine-dependent methyltransferase Mb3432 (348 aa).

Residues aspartate 171 and 200–201 contribute to the S-adenosyl-L-methionine site; that span reads DL.

The protein belongs to the UPF0677 family.

Exhibits S-adenosyl-L-methionine-dependent methyltransferase activity. The sequence is that of Putative S-adenosyl-L-methionine-dependent methyltransferase Mb3432 from Mycobacterium bovis (strain ATCC BAA-935 / AF2122/97).